Consider the following 284-residue polypeptide: Bifunctional protein FolD (284 aa).

NADP(+) is bound by residues 165 to 167 (GRS) and serine 190.

It belongs to the tetrahydrofolate dehydrogenase/cyclohydrolase family. Homodimer.

It catalyses the reaction (6R)-5,10-methylene-5,6,7,8-tetrahydrofolate + NADP(+) = (6R)-5,10-methenyltetrahydrofolate + NADPH. It carries out the reaction (6R)-5,10-methenyltetrahydrofolate + H2O = (6R)-10-formyltetrahydrofolate + H(+). Its pathway is one-carbon metabolism; tetrahydrofolate interconversion. Catalyzes the oxidation of 5,10-methylenetetrahydrofolate to 5,10-methenyltetrahydrofolate and then the hydrolysis of 5,10-methenyltetrahydrofolate to 10-formyltetrahydrofolate. The chain is Bifunctional protein FolD from Streptococcus mutans serotype c (strain ATCC 700610 / UA159).